A 264-amino-acid chain; its full sequence is MRFKELVFLLKIDEEELLEKLYEEGFFNFAIEENKEGDRLLRVYLREGETLPSFLSNWKILDERLTTPKDWMVELEPFEIVEDVVVDPTEKVTRTDKIVVKLSPGVAFGTGLHPTTQMSVLFLKKYLKKGDRVVDVGCGTGILAIVAKKLGASYVLAVDVDEQAVEVAKENVQKNSVDVTVKRSDLLSEVEGVFDLVVSNILAEIHLRLLEDVSRVTHEKSILILSGIVDTKEDMVREKAQKKGWNLLERKQEREWVTLVMKRS.

4 residues coordinate S-adenosyl-L-methionine: Thr-116, Gly-137, Asp-159, and Asn-200.

It belongs to the methyltransferase superfamily. PrmA family.

It localises to the cytoplasm. It carries out the reaction L-lysyl-[protein] + 3 S-adenosyl-L-methionine = N(6),N(6),N(6)-trimethyl-L-lysyl-[protein] + 3 S-adenosyl-L-homocysteine + 3 H(+). In terms of biological role, methylates ribosomal protein L11. The polypeptide is Ribosomal protein L11 methyltransferase (Thermotoga neapolitana).